Here is a 484-residue protein sequence, read N- to C-terminus: tRNA sulfurtransferase (484 aa).

Residues E63 to R167 enclose the THUMP domain. ATP is bound by residues L185–I186, K267, G289, and Q298. C346 and C458 are joined by a disulfide. Positions I406–P484 constitute a Rhodanese domain. C458 acts as the Cysteine persulfide intermediate in catalysis.

The protein belongs to the ThiI family.

The protein resides in the cytoplasm. It catalyses the reaction [ThiI sulfur-carrier protein]-S-sulfanyl-L-cysteine + a uridine in tRNA + 2 reduced [2Fe-2S]-[ferredoxin] + ATP + H(+) = [ThiI sulfur-carrier protein]-L-cysteine + a 4-thiouridine in tRNA + 2 oxidized [2Fe-2S]-[ferredoxin] + AMP + diphosphate. The catalysed reaction is [ThiS sulfur-carrier protein]-C-terminal Gly-Gly-AMP + S-sulfanyl-L-cysteinyl-[cysteine desulfurase] + AH2 = [ThiS sulfur-carrier protein]-C-terminal-Gly-aminoethanethioate + L-cysteinyl-[cysteine desulfurase] + A + AMP + 2 H(+). It participates in cofactor biosynthesis; thiamine diphosphate biosynthesis. In terms of biological role, catalyzes the ATP-dependent transfer of a sulfur to tRNA to produce 4-thiouridine in position 8 of tRNAs, which functions as a near-UV photosensor. Also catalyzes the transfer of sulfur to the sulfur carrier protein ThiS, forming ThiS-thiocarboxylate. This is a step in the synthesis of thiazole, in the thiamine biosynthesis pathway. The sulfur is donated as persulfide by IscS. The chain is tRNA sulfurtransferase from Shewanella halifaxensis (strain HAW-EB4).